A 356-amino-acid polypeptide reads, in one-letter code: Histidinol-phosphate aminotransferase (356 aa).

Lys214 carries the post-translational modification N6-(pyridoxal phosphate)lysine.

This sequence belongs to the class-II pyridoxal-phosphate-dependent aminotransferase family. Histidinol-phosphate aminotransferase subfamily. In terms of assembly, homodimer. Requires pyridoxal 5'-phosphate as cofactor.

It carries out the reaction L-histidinol phosphate + 2-oxoglutarate = 3-(imidazol-4-yl)-2-oxopropyl phosphate + L-glutamate. It functions in the pathway amino-acid biosynthesis; L-histidine biosynthesis; L-histidine from 5-phospho-alpha-D-ribose 1-diphosphate: step 7/9. The polypeptide is Histidinol-phosphate aminotransferase (Escherichia coli O9:H4 (strain HS)).